Reading from the N-terminus, the 350-residue chain is Histidinol-phosphate aminotransferase (350 aa).

Position 209 is an N6-(pyridoxal phosphate)lysine (Lys209).

It belongs to the class-II pyridoxal-phosphate-dependent aminotransferase family. Histidinol-phosphate aminotransferase subfamily. As to quaternary structure, homodimer. The cofactor is pyridoxal 5'-phosphate.

The enzyme catalyses L-histidinol phosphate + 2-oxoglutarate = 3-(imidazol-4-yl)-2-oxopropyl phosphate + L-glutamate. Its pathway is amino-acid biosynthesis; L-histidine biosynthesis; L-histidine from 5-phospho-alpha-D-ribose 1-diphosphate: step 7/9. This is Histidinol-phosphate aminotransferase from Christiangramia forsetii (strain DSM 17595 / CGMCC 1.15422 / KT0803) (Gramella forsetii).